A 284-amino-acid chain; its full sequence is Probable endonuclease 4 (284 aa).

His-69, His-109, Glu-145, Asp-179, His-182, His-216, Asp-229, His-231, and Glu-261 together coordinate Zn(2+).

Belongs to the AP endonuclease 2 family. The cofactor is Zn(2+).

It catalyses the reaction Endonucleolytic cleavage to 5'-phosphooligonucleotide end-products.. Endonuclease IV plays a role in DNA repair. It cleaves phosphodiester bonds at apurinic or apyrimidinic (AP) sites, generating a 3'-hydroxyl group and a 5'-terminal sugar phosphate. The protein is Probable endonuclease 4 of Klebsiella pneumoniae subsp. pneumoniae (strain ATCC 700721 / MGH 78578).